The sequence spans 464 residues: Glycine receptor subunit alpha-3 (464 aa).

The signal sequence occupies residues 1 to 33 (MAHVRHFRTLVSGFYFWEAALLLSLVATKETDS). Residues 34–255 (ARSRSAPMSP…RFHLERQMGY (222 aa)) are Extracellular-facing. N-linked (GlcNAc...) asparagine glycosylation occurs at N71. The cysteines at positions 171 and 185 are disulfide-linked. Positions 225 and 227 each coordinate Zn(2+). Cysteines 231 and 242 form a disulfide. 235 to 240 (YNTGKF) provides a ligand contact to strychnine. H248 lines the Zn(2+) pocket. The helical transmembrane segment at 256 to 277 (YLIQMYIPSLLIVILSWVSFWI) threads the bilayer. The Cytoplasmic portion of the chain corresponds to 278 to 282 (NMDAA). Residues 283–303 (PARVALGITTVLTMTTQSSGS) form a helical membrane-spanning segment. Residues 304–314 (RASLPKVSYVK) lie on the Extracellular side of the membrane. Residues 315–335 (AIDIWMAVCLLFVFSALLEYA) traverse the membrane as a helical segment. The Cytoplasmic segment spans residues 336–430 (AVNFVSRQHK…FIDRAKKIDT (95 aa)). Phosphoserine is present on residues S370 and S379. The helical transmembrane segment at 431-451 (ISRACFPLAFLIFNIFYWVIY) threads the bilayer. The Extracellular segment spans residues 452-464 (KILRHEDIHQQQD).

This sequence belongs to the ligand-gated ion channel (TC 1.A.9) family. Glycine receptor (TC 1.A.9.3) subfamily. GLRA3 sub-subfamily. As to quaternary structure, homopentamer (in vitro). Heteropentamer composed of GLRA3 and GLRB. Both homopentamers and heteropentamers form functional ion channels, but their characteristics are subtly different. Phosphorylated by PKA; this causes down-regulation of channel activity. As to expression, widely distributed throughout the central nervous system.

The protein resides in the postsynaptic cell membrane. It is found in the perikaryon. It localises to the cell projection. Its subcellular location is the dendrite. The protein localises to the synapse. The protein resides in the cell membrane. It carries out the reaction chloride(in) = chloride(out). Its function is as follows. Glycine receptors are ligand-gated chloride channels. Channel opening is triggered by extracellular glycine. Channel characteristics depend on the subunit composition; heteropentameric channels display faster channel closure. Plays an important role in the down-regulation of neuronal excitability. Contributes to the generation of inhibitory postsynaptic currents. Contributes to increased pain perception in response to increased prostaglandin E2 levels. Plays a role in cellular responses to ethanol. The polypeptide is Glycine receptor subunit alpha-3 (GLRA3) (Homo sapiens (Human)).